A 488-amino-acid chain; its full sequence is MSFNHKTIEELHDLLVAKEISATELTQKTLEDIKSREEAVGSFITVSEEAALRQAAAIDAKGIDADNLMSGIPLAVKDNISTKGILTTAASKMLYNYEPIFDATSVANAYAKDMIVIGKTNMDEFAMGGSTETSYFKKTKNAWDHTKVPGGSSGGSATAVASGQVRLSLGSDTGGSIRQPAAFNGVVGLKPTYGTVSRYGLIAFGSSLDQIGPFAPTVKENAQLLNVIASSDVKDATSAPVRIADYTSKIGRDIKGMKIALPKEYLGEGIDPEIKETVLAAAKQFEALGATVEEVSLPHSKYGVAVYYIIASSEASSNLQRFDGIRYGFRADDAKNLDEIYVNTRSQGFGDEVKRRIMLGTFSLSSGYYDAYFKKAGQVRTLIIQDFDKVFADYDLILGPTTPTVAFGLDTLNHDPVAMYLADLLTIPVNLAGLPGISIPAGFVDGLPVGLQLIGPKYAEETIYQAAAAFEAVTDYHKQQPIIFGGDK.

Residues lysine 77 and serine 152 each act as charge relay system in the active site. Catalysis depends on serine 176, which acts as the Acyl-ester intermediate.

This sequence belongs to the amidase family. GatA subfamily. As to quaternary structure, heterotrimer of A, B and C subunits.

It catalyses the reaction L-glutamyl-tRNA(Gln) + L-glutamine + ATP + H2O = L-glutaminyl-tRNA(Gln) + L-glutamate + ADP + phosphate + H(+). Its function is as follows. Allows the formation of correctly charged Gln-tRNA(Gln) through the transamidation of misacylated Glu-tRNA(Gln) in organisms which lack glutaminyl-tRNA synthetase. The reaction takes place in the presence of glutamine and ATP through an activated gamma-phospho-Glu-tRNA(Gln). This is Glutamyl-tRNA(Gln) amidotransferase subunit A from Streptococcus pyogenes serotype M6 (strain ATCC BAA-946 / MGAS10394).